Consider the following 225-residue polypeptide: Holliday junction branch migration complex subunit RuvA (225 aa).

Positions 1–71 (MISWINGELV…EDSDLLFGFT (71 aa)) are domain I. The domain II stretch occupies residues 72–150 (SKDQKFFFIE…SKIQIEEEKG (79 aa)). The segment at 151 to 161 (QEEFEITNPEI) is flexible linker. Positions 161–225 (IYKLMEDLQL…LDQGNSNLAR (65 aa)) are domain III.

This sequence belongs to the RuvA family. In terms of assembly, homotetramer. Forms an RuvA(8)-RuvB(12)-Holliday junction (HJ) complex. HJ DNA is sandwiched between 2 RuvA tetramers; dsDNA enters through RuvA and exits via RuvB. An RuvB hexamer assembles on each DNA strand where it exits the tetramer. Each RuvB hexamer is contacted by two RuvA subunits (via domain III) on 2 adjacent RuvB subunits; this complex drives branch migration. In the full resolvosome a probable DNA-RuvA(4)-RuvB(12)-RuvC(2) complex forms which resolves the HJ.

It is found in the cytoplasm. In terms of biological role, the RuvA-RuvB-RuvC complex processes Holliday junction (HJ) DNA during genetic recombination and DNA repair, while the RuvA-RuvB complex plays an important role in the rescue of blocked DNA replication forks via replication fork reversal (RFR). RuvA specifically binds to HJ cruciform DNA, conferring on it an open structure. The RuvB hexamer acts as an ATP-dependent pump, pulling dsDNA into and through the RuvAB complex. HJ branch migration allows RuvC to scan DNA until it finds its consensus sequence, where it cleaves and resolves the cruciform DNA. The chain is Holliday junction branch migration complex subunit RuvA from Prochlorococcus marinus (strain MIT 9215).